Here is a 427-residue protein sequence, read N- to C-terminus: Peptidase B (427 aa).

Lys-195 and Asp-200 together coordinate Mn(2+). Lys-207 is a catalytic residue. Residues Asp-218, Asp-277, and Glu-279 each coordinate Mn(2+). Arg-281 is a catalytic residue.

Belongs to the peptidase M17 family. Homohexamer. It depends on Mn(2+) as a cofactor.

It is found in the cytoplasm. The catalysed reaction is Release of an N-terminal amino acid, Xaa, from a peptide or arylamide. Xaa is preferably Glu or Asp but may be other amino acids, including Leu, Met, His, Cys and Gln.. In terms of biological role, probably plays an important role in intracellular peptide degradation. In Escherichia coli (strain SE11), this protein is Peptidase B.